The following is a 578-amino-acid chain: Acyl-CoA synthetase ACTT5 (578 aa).

AMP is bound at residue 211–222 (RLTTSGTTGLPK). Residues 472-551 (ELEAALLQAK…DEIPRSPTGK (80 aa)) form an AMP-binding region.

Belongs to the ATP-dependent AMP-binding enzyme family.

It functions in the pathway mycotoxin biosynthesis. Its function is as follows. Acyl-CoA synthetase; part of the gene clusters that mediate the biosynthesis of the host-selective toxins (HSTs) ACT-toxins responsible for brown spot of tangerine disease by the tangerine pathotype which affects tangerines and mandarins. ACT-toxins consist of three moieties, 9,10-epoxy-8-hydroxy-9-methyl-decatrienoic acid (EDA), valine and a polyketide. ACT-toxin I is toxic to both citrus and pear; toxin II the 5''-deoxy derivative of ACT-toxin I, is highly toxic to pear and slightly toxic to citrus. On cellular level, ACT-toxins affect plasma membrane of susceptible cells and cause a sudden increase in loss of K(+) after a few minutes of toxin treatment. The acyl-CoA ligase ACTT1, the hydrolase ACTT2, the enoyl-CoA hydratases ACTT3 and ACTT6, and the acyl-CoA synthetase ACTT5 are all involved in the biosynthesis of the AK-, AF- and ACT-toxin common 9,10-epoxy-8-hydroxy-9-methyl-decatrienoic acid (EDA) structural moiety. The exact role of each enzyme, and of additional enzymes identified within the AF-toxin clusters have still to be determined. On the other hand, ACTTS1 to ACTTS4 are specific to the tangerine pathotype. The function of ACTTS3 is to elongate the polyketide chain portion of ACT-toxin that is unique to this toxin. The enoyl-reductase ACTTS2 might complement the missing enoyl-reductase (ER) domain in ACTTS3 in the synthesis of the polyketide portion of ACT-toxin. The roles of the nonribosomal peptide synthetases-related proteins ACTTS1 and ACTTS4 have also still not been elucidated. This chain is Acyl-CoA synthetase ACTT5, found in Alternaria alternata (Alternaria rot fungus).